The chain runs to 461 residues: Bacterial E1-like protein BilD (461 aa).

Cys385 acts as the Glycyl thioester intermediate in catalysis.

Component of the Bil (bacterial ISG15-like) antiviral defense system, composed of BilA, BilB, BilC and BilD. The Bil system specifically conjugates a ubiquitin-like moiety (bilA) to the bacteriophage central tail fiber (CTF, or tip attachment protein J) via reactions involving E1 (bilD) and E2 (bilB). Modifies CTF of phage SECphi27 and SECphi4, which probably interferes with assembly of the phage tail. Also modifies T5 baseplate hub protein pb3 (gene D16), but not gp27 of phage T6 (Bil defends against T6). BilD (E1) catalyzes the first step in conjugation. Activates ubiquitin-like BilA by first adenylating its C-terminal glycine residue with ATP, and then conjugates it to the side chain of a cysteine residue in E1 (this protein), yielding a ubiquitin-E1 thioester and free AMP. Bil-encoding bacteria produce mostly defective phage SECphi27, many of which have phage assembly defects, including no tails. SECphi27 phage progeny produced in E.coli with the Bil system inject less DNA into naive host cells, maybe because the phage are less able to adsorb and inject their DNA into host cells. In terms of biological role, expression of the Bil system in E.coli (strain MG1655) confers about 100-fold resistance to phage SECphi27, SECphi18, SECphi6, SECphi4 and T5, but not to SECphi17. When cells expressing the Bil system are infected by phage SECphi27 at low multiplicity of infection (0.03 MOI) the culture survives, at 3.0 MOI the culture collapses at the same time as cells without the Bil system. The polypeptide is Bacterial E1-like protein BilD (Collimonas sp. (strain OK412)).